We begin with the raw amino-acid sequence, 329 residues long: NTD biosynthesis operon regulator NtdR (329 aa).

In terms of domain architecture, HTH lacI-type spans P2–R56. A DNA-binding region (H-T-H motif) is located at residues I4–N23.

Functionally, positively regulates the ntdABC operon and negatively regulates its own transcription. Binds to NTD to induce ntdABC transcription. The protein is NTD biosynthesis operon regulator NtdR (ntdR) of Bacillus subtilis (strain 168).